A 301-amino-acid polypeptide reads, in one-letter code: Probable deoxyhypusine synthase 1 (301 aa).

The active-site Nucleophile is the K269.

This sequence belongs to the deoxyhypusine synthase family. It depends on NAD(+) as a cofactor.

It catalyses the reaction [eIF5A protein]-L-lysine + spermidine = [eIF5A protein]-deoxyhypusine + propane-1,3-diamine. It functions in the pathway protein modification; eIF5A hypusination. Its function is as follows. Catalyzes the NAD-dependent oxidative cleavage of spermidine and the subsequent transfer of the butylamine moiety of spermidine to the epsilon-amino group of a specific lysine residue of the eIF-5A precursor protein to form the intermediate deoxyhypusine residue. The chain is Probable deoxyhypusine synthase 1 (dys1) from Archaeoglobus fulgidus (strain ATCC 49558 / DSM 4304 / JCM 9628 / NBRC 100126 / VC-16).